Consider the following 315-residue polypeptide: Putative HTH-type transcriptional regulatory protein PF1851 (315 aa).

An HTH cro/C1-type domain is found at 131 to 189; sequence LRELREKYGYSTTELAEMLGVSRKSVQRYEKGEGMVSIDVAIRLEEIFDEPLVKPIDIF. A DNA-binding region (H-T-H motif) is located at residues 142–161; the sequence is TTELAEMLGVSRKSVQRYEK.

This Pyrococcus furiosus (strain ATCC 43587 / DSM 3638 / JCM 8422 / Vc1) protein is Putative HTH-type transcriptional regulatory protein PF1851.